A 130-amino-acid chain; its full sequence is Ornithine decarboxylase antizyme (130 aa).

Basic and acidic residues predominate over residues 1-14 (SDVPVHHRTDHDRA). The segment at 1–56 (SDVPVHHRTDHDRASLLTGSSRKSSVDSAGGSLFEASSRASSPSSSSSSECSDTES) is disordered. The span at 17–27 (LTGSSRKSSVD) shows a compositional bias: polar residues. A compositionally biased stretch (low complexity) spans 32–51 (SLFEASSRASSPSSSSSSEC).

This sequence belongs to the ODC antizyme family. Interacts with ODC1 and thereby sterically blocks ODC homodimerization.

Its function is as follows. Ornithine decarboxylase (ODC) antizyme protein that negatively regulates ODC activity and intracellular polyamine biosynthesis and uptake in response to increased intracellular polyamine levels. Binds to ODC monomers, inhibiting the assembly of the functional ODC homodimer, and targets the monomers for ubiquitin-independent proteolytic destruction by the 26S proteasome. This Drosophila virilis (Fruit fly) protein is Ornithine decarboxylase antizyme (Oda).